Reading from the N-terminus, the 488-residue chain is N-succinylglutamate 5-semialdehyde dehydrogenase (488 aa).

An NAD(+)-binding site is contributed by 221 to 226 (GSSRTG). Catalysis depends on residues E244 and C278.

It belongs to the aldehyde dehydrogenase family. AstD subfamily.

It catalyses the reaction N-succinyl-L-glutamate 5-semialdehyde + NAD(+) + H2O = N-succinyl-L-glutamate + NADH + 2 H(+). It participates in amino-acid degradation; L-arginine degradation via AST pathway; L-glutamate and succinate from L-arginine: step 4/5. Its function is as follows. Catalyzes the NAD-dependent reduction of succinylglutamate semialdehyde into succinylglutamate. This Pseudomonas fluorescens (strain SBW25) protein is N-succinylglutamate 5-semialdehyde dehydrogenase.